Here is a 162-residue protein sequence, read N- to C-terminus: uncharacterized protein (162 aa).

The first 21 residues, 1-21 (MEGIMKKFFALMTLIAGISFS), serve as a signal peptide directing secretion. Positions 32–118 (VIRESKFIAK…KKAELEKMVF (87 aa)) form a coiled coil.

This sequence belongs to the Skp family.

This is an uncharacterized protein from Aquifex aeolicus (strain VF5).